The sequence spans 351 residues: Probable cobalt-factor III C(17)-methyltransferase (351 aa).

Belongs to the precorrin methyltransferase family.

The enzyme catalyses Co(II)-factor III + S-adenosyl-L-methionine + H(+) = Co(II)-factor IV + S-adenosyl-L-homocysteine. Its pathway is cofactor biosynthesis; adenosylcobalamin biosynthesis; cob(II)yrinate a,c-diamide from sirohydrochlorin (anaerobic route): step 3/10. Methyltransferase that likely catalyzes the ring contraction and methylation of C-17 in cobalt-factor III to form cobalt-factor IV. May also convert cobalt-precorrin-3 to cobalt-precorrin-4. This chain is Probable cobalt-factor III C(17)-methyltransferase (cbiH), found in Methanothermobacter thermautotrophicus (strain ATCC 29096 / DSM 1053 / JCM 10044 / NBRC 100330 / Delta H) (Methanobacterium thermoautotrophicum).